The sequence spans 379 residues: tRNA 2-selenouridine synthase (379 aa).

Residues 17 to 140 form the Rhodanese domain; the sequence is FLSGAPLLDT…MRRFLIESLE (124 aa). The S-selanylcysteine intermediate role is filled by Cys100.

It belongs to the SelU family. Monomer.

The enzyme catalyses 5-methylaminomethyl-2-thiouridine(34) in tRNA + selenophosphate + (2E)-geranyl diphosphate + H2O + H(+) = 5-methylaminomethyl-2-selenouridine(34) in tRNA + (2E)-thiogeraniol + phosphate + diphosphate. It carries out the reaction 5-methylaminomethyl-2-thiouridine(34) in tRNA + (2E)-geranyl diphosphate = 5-methylaminomethyl-S-(2E)-geranyl-thiouridine(34) in tRNA + diphosphate. The catalysed reaction is 5-methylaminomethyl-S-(2E)-geranyl-thiouridine(34) in tRNA + selenophosphate + H(+) = 5-methylaminomethyl-2-(Se-phospho)selenouridine(34) in tRNA + (2E)-thiogeraniol. It catalyses the reaction 5-methylaminomethyl-2-(Se-phospho)selenouridine(34) in tRNA + H2O = 5-methylaminomethyl-2-selenouridine(34) in tRNA + phosphate. Involved in the post-transcriptional modification of the uridine at the wobble position (U34) of tRNA(Lys), tRNA(Glu) and tRNA(Gln). Catalyzes the conversion of 2-thiouridine (S2U-RNA) to 2-selenouridine (Se2U-RNA). Acts in a two-step process involving geranylation of 2-thiouridine (S2U) to S-geranyl-2-thiouridine (geS2U) and subsequent selenation of the latter derivative to 2-selenouridine (Se2U) in the tRNA chain. The chain is tRNA 2-selenouridine synthase from Hahella chejuensis (strain KCTC 2396).